The chain runs to 86 residues: Large ribosomal subunit protein bL27 (86 aa).

Residues 1 to 24 (MATKKAGGSSRNGRDSAGRRLGVK) form a disordered region.

Belongs to the bacterial ribosomal protein bL27 family.

This is Large ribosomal subunit protein bL27 from Rickettsia conorii (strain ATCC VR-613 / Malish 7).